The primary structure comprises 445 residues: UDP-N-acetylmuramoylalanine--D-glutamate ligase (445 aa).

Residue 117 to 123 coordinates ATP; sequence GSNGKTT.

This sequence belongs to the MurCDEF family.

It is found in the cytoplasm. The enzyme catalyses UDP-N-acetyl-alpha-D-muramoyl-L-alanine + D-glutamate + ATP = UDP-N-acetyl-alpha-D-muramoyl-L-alanyl-D-glutamate + ADP + phosphate + H(+). It functions in the pathway cell wall biogenesis; peptidoglycan biosynthesis. Cell wall formation. Catalyzes the addition of glutamate to the nucleotide precursor UDP-N-acetylmuramoyl-L-alanine (UMA). The polypeptide is UDP-N-acetylmuramoylalanine--D-glutamate ligase (Neisseria gonorrhoeae (strain NCCP11945)).